The sequence spans 360 residues: Phenylalanine--tRNA ligase alpha subunit (360 aa).

Residue Glu-260 coordinates Mg(2+).

This sequence belongs to the class-II aminoacyl-tRNA synthetase family. Phe-tRNA synthetase alpha subunit type 1 subfamily. Tetramer of two alpha and two beta subunits. Mg(2+) serves as cofactor.

It localises to the cytoplasm. It catalyses the reaction tRNA(Phe) + L-phenylalanine + ATP = L-phenylalanyl-tRNA(Phe) + AMP + diphosphate + H(+). This Methylobacterium nodulans (strain LMG 21967 / CNCM I-2342 / ORS 2060) protein is Phenylalanine--tRNA ligase alpha subunit.